Here is a 581-residue protein sequence, read N- to C-terminus: Adenine deaminase (581 aa).

This sequence belongs to the metallo-dependent hydrolases superfamily. Adenine deaminase family. Requires Mn(2+) as cofactor.

The enzyme catalyses adenine + H2O + H(+) = hypoxanthine + NH4(+). In Lysinibacillus sphaericus (strain C3-41), this protein is Adenine deaminase.